The primary structure comprises 382 residues: Mannitol-1-phosphate 5-dehydrogenase (382 aa).

3–14 (ALHFGAGNIGRG) is an NAD(+) binding site.

Belongs to the mannitol dehydrogenase family.

It carries out the reaction D-mannitol 1-phosphate + NAD(+) = beta-D-fructose 6-phosphate + NADH + H(+). This chain is Mannitol-1-phosphate 5-dehydrogenase, found in Salmonella dublin (strain CT_02021853).